The following is a 1012-amino-acid chain: Structural polyprotein (1012 aa).

Asp30 is a binding site for a divalent metal cation. The Peptidase S50 domain occupies 513 to 755; it reads ADKGYEVVAN…AGRQYHLAMA (243 aa). Ser652 serves as the catalytic Nucleophile. Residue Lys692 is part of the active site. Disordered stretches follow at residues 837 to 857 and 968 to 1012; these read GYGV…KDTR and TAME…EDLE. The segment covering 975–986 has biased composition (basic residues); it reads RNPRRAPPKPKP. Positions 1003–1012 are interaction with VP1 protein; that stretch reads IRTVSDEDLE.

As to quaternary structure, homotrimer. A central divalent metal stabilizes the VP2 trimer. Interacts with host ITGA4/ITGB1. Homodimer. Interacts (via C-terminus) with VP1 in the cytoplasm. Interacts with VP2. In terms of processing, specific enzymatic cleavages yield mature proteins. The capsid assembly seems to be regulated by polyprotein processing. The protease VP4 cleaves itself off the polyprotein, thus releasing pre-VP2 and VP3 within the infected cell. During capsid assembly, the C-terminus of pre-VP2 is further processed by VP4, giving rise to VP2, the external capsid protein and three small peptides that all stay closely associated with the capsid.

Its subcellular location is the virion. The protein localises to the host cytoplasm. Its function is as follows. Capsid protein VP2 self assembles to form an icosahedral capsid with a T=13 symmetry, about 70 nm in diameter, and consisting of 260 VP2 trimers. The capsid encapsulates the genomic dsRNA. VP2 is also involved in attachment and entry into the host cell by interacting with host ITGA4/ITGB1. The precursor of VP2 plays an important role in capsid assembly. First, pre-VP2 and VP2 oligomers assemble to form a procapsid. Then, the pre-VP2 intermediates may be processed into VP2 proteins by proteolytic cleavage mediated by VP4 to obtain the mature virion. The final capsid is composed of pentamers and hexamers but VP2 has a natural tendency to assemble into all-pentameric structures. Therefore pre-VP2 may be required to allow formation of the hexameric structures. In terms of biological role, protease VP4 is a serine protease that cleaves the polyprotein into its final products. Pre-VP2 is first partially cleaved, and may be completely processed by VP4 upon capsid maturation. Functionally, capsid protein VP3 plays a key role in virion assembly by providing a scaffold for the capsid made of VP2. May self-assemble to form a T=4-like icosahedral inner-capsid composed of at least 180 trimers. Plays a role in genomic RNA packaging by recruiting VP1 into the capsid and interacting with the dsRNA genome segments to form a ribonucleoprotein complex. Additionally, the interaction of the VP3 C-terminal tail with VP1 removes the inherent structural blockade of the polymerase active site. Thus, VP3 can also function as a transcriptional activator. Its function is as follows. Structural peptide 1 is a small peptide derived from pre-VP2 C-terminus. It destabilizes and perforates cell membranes, suggesting a role during entry. Structural peptide 2 is a small peptide derived from pVP2 C-terminus. It is not essential for the virus viability, but viral growth is affected when missing. In terms of biological role, structural peptide 3 is a small peptide derived from pVP2 C-terminus. It is not essential for the virus viability, but viral growth is affected when missing. Functionally, structural peptide 4 is a small peptide derived from pVP2 C-terminus. It is essential for the virus viability. This Gallus gallus (Chicken) protein is Structural polyprotein.